A 438-amino-acid chain; its full sequence is sn-glycerol-3-phosphate-binding periplasmic protein UgpB (438 aa).

Positions 1–23 are cleaved as a signal peptide; the sequence is MKPLHYTASALALGLALMGNAQA. 7 residues coordinate sn-glycerol 3-phosphate: tyrosine 65, glutamate 89, serine 144, serine 270, glycine 307, tyrosine 346, and arginine 397.

Belongs to the bacterial solute-binding protein 1 family. The complex is composed of two ATP-binding proteins (UgpC), two transmembrane proteins (UgpA and UgpE) and a solute-binding protein (UgpB).

It is found in the periplasm. Its function is as follows. Part of the ABC transporter complex UgpBAEC involved in sn-glycerol-3-phosphate (G3P) import. Binds G3P. In Shigella flexneri serotype 5b (strain 8401), this protein is sn-glycerol-3-phosphate-binding periplasmic protein UgpB (ugpB).